Reading from the N-terminus, the 683-residue chain is U4/U6 small nuclear ribonucleoprotein Prp3 (683 aa).

A PWI domain is found at 1 to 87 (MALSKRELDE…HSKSSSDRSR (87 aa)). Residues 73–107 (GRSSRHSKSSSDRSRKRELKEVFGDDSEISKESSG) are compositionally biased toward basic and acidic residues. The disordered stretch occupies residues 73–135 (GRSSRHSKSS…IPGPPSESPG (63 aa)). A Glycyl lysine isopeptide (Lys-Gly) (interchain with G-Cter in SUMO2) cross-link involves residue Lys-139. Residues 153 to 183 (IEERKKQLSFISPPTPQPKTPSSSQPERLPI) form a disordered region. Ser-164 is subject to Phosphoserine. Residue Thr-167 is modified to Phosphothreonine. Residues Lys-244 and Lys-252 each participate in a glycyl lysine isopeptide (Lys-Gly) (interchain with G-Cter in SUMO2) cross-link. A mediates interaction with SART3 region spans residues 416-550 (NLVEHPAQLN…VHISVYRVRN (135 aa)). The residue at position 619 (Ser-619) is a Phosphoserine.

Component of the precatalytic spliceosome (spliceosome B complex). Component of the U4/U6-U5 tri-snRNP complex, a building block of the precatalytic spliceosome (spliceosome B complex). The U4/U6-U5 tri-snRNP complex is composed of the U4, U6 and U5 snRNAs and at least PRPF3, PRPF4, PRPF6, PRPF8, PRPF31, SNRNP200, TXNL4A, SNRNP40, SNRPB, SNRPD1, SNRPD2, SNRPD3, SNRPE, SNRPF, SNRPG, DDX23, CD2BP2, PPIH, SNU13, EFTUD2, SART1 and USP39, plus LSM2, LSM3, LSM4, LSM5, LSM6, LSM7 and LSM8. Interacts directly with PRPF4. Part of a heteromeric complex containing PPIH, PRPF3 and PRPF4 that is stable in the absence of RNA. Interacts with SART3; the interaction is direct and recruits the deubiquitinase USP4 to PRPF3. Interacts with PRPF19. Interacts ('Lys-63'-linked polyubiquitinated) with PRPF8 (via the MPN (JAB/Mov34) domain); may stabilize the U4/U6-U5 tri-snRNP complex. Interacts with ERCC6. Ubiquitinated. Undergoes 'Lys-63'-linked polyubiquitination by PRPF19 and deubiquitination by USP4. 'Lys-63'-linked ubiquitination increases the affinity for PRPF8 and may regulate the assembly of the U4/U6-U5 tri-snRNP complex.

The protein resides in the nucleus. It is found in the nucleus speckle. Its function is as follows. Plays a role in pre-mRNA splicing as component of the U4/U6-U5 tri-snRNP complex that is involved in spliceosome assembly, and as component of the precatalytic spliceosome (spliceosome B complex). This chain is U4/U6 small nuclear ribonucleoprotein Prp3 (PRPF3), found in Pongo abelii (Sumatran orangutan).